The sequence spans 33 residues: Toxin Bcg III 25.52 (33 aa).

A disulfide bond links cysteine 6 and cysteine 28.

The protein localises to the secreted. The protein resides in the nematocyst. The chain is Toxin Bcg III 25.52 from Bunodosoma cangicum (Sea anemone).